The primary structure comprises 395 residues: Phosphoprotein (395 aa).

A compositionally biased stretch (polar residues) spans 143–157; it reads FSSGPSLTDQASSKD. The interval 143–183 is disordered; that stretch reads FSSGPSLTDQASSKDPNFKRGGEKLTDATKADIGGSGASPG. Over residues 158–172 the composition is skewed to basic and acidic residues; it reads PNFKRGGEKLTDATK. Positions 220 to 283 are multimerization; sequence ENVKEIIEIL…MTTMKIMDPS (64 aa).

This sequence belongs to the rubulavirus/avulavirus P protein family. In terms of assembly, homotetramer. Interacts (via multimerization domain) with polymerase L; this interaction forms the polymerase L-P complex. Interacts (via N-terminus) with N0 (via Ncore); this interaction allows P to chaperon N0 to avoid N polymerization before encapsidation. Interacts (via C-terminus) with N-RNA template; this interaction positions the polymerase on the template for both transcription and replication.

In terms of biological role, essential cofactor of the RNA polymerase L that plays a central role in the transcription and replication by forming the polymerase complex with RNA polymerase L and recruiting L to the genomic N-RNA template for RNA synthesis. Also plays a central role in the encapsidation of nascent RNA chains by forming the encapsidation complex with the nucleocapsid protein N (N-P complex). Acts as a chaperone for newly synthesized free N protein, so-called N0, allowing encapsidation of nascent RNA chains during replication. The nucleoprotein protein N prevents excessive phosphorylation of P, which leads to down-regulation of viral transcription/ replication. Participates, together with N, in the formation of viral factories (viroplasms), which are large inclusions in the host cytoplasm where replication takes place. The sequence is that of Phosphoprotein (P/V) from Simian virus 41 (SV41).